A 161-amino-acid polypeptide reads, in one-letter code: Methylated-DNA--protein-cysteine methyltransferase (161 aa).

Cys128 functions as the Nucleophile; methyl group acceptor in the catalytic mechanism.

Belongs to the MGMT family.

It is found in the cytoplasm. It carries out the reaction a 6-O-methyl-2'-deoxyguanosine in DNA + L-cysteinyl-[protein] = S-methyl-L-cysteinyl-[protein] + a 2'-deoxyguanosine in DNA. The catalysed reaction is a 4-O-methyl-thymidine in DNA + L-cysteinyl-[protein] = a thymidine in DNA + S-methyl-L-cysteinyl-[protein]. In terms of biological role, involved in the cellular defense against the biological effects of O6-methylguanine (O6-MeG) and O4-methylthymine (O4-MeT) in DNA. Repairs the methylated nucleobase in DNA by stoichiometrically transferring the methyl group to a cysteine residue in the enzyme. This is a suicide reaction: the enzyme is irreversibly inactivated. This chain is Methylated-DNA--protein-cysteine methyltransferase, found in Methanocaldococcus vulcanius (strain ATCC 700851 / DSM 12094 / M7) (Methanococcus vulcanius).